The sequence spans 275 residues: Tryptophan synthase alpha chain (275 aa).

Active-site proton acceptor residues include glutamate 49 and aspartate 60.

Belongs to the TrpA family. In terms of assembly, tetramer of two alpha and two beta chains.

It catalyses the reaction (1S,2R)-1-C-(indol-3-yl)glycerol 3-phosphate + L-serine = D-glyceraldehyde 3-phosphate + L-tryptophan + H2O. Its pathway is amino-acid biosynthesis; L-tryptophan biosynthesis; L-tryptophan from chorismate: step 5/5. Its function is as follows. The alpha subunit is responsible for the aldol cleavage of indoleglycerol phosphate to indole and glyceraldehyde 3-phosphate. This chain is Tryptophan synthase alpha chain, found in Psychrobacter sp. (strain PRwf-1).